Reading from the N-terminus, the 98-residue chain is Large ribosomal subunit protein uL23 (98 aa).

Belongs to the universal ribosomal protein uL23 family. As to quaternary structure, part of the 50S ribosomal subunit. Contacts protein L29, and trigger factor when it is bound to the ribosome.

One of the early assembly proteins it binds 23S rRNA. One of the proteins that surrounds the polypeptide exit tunnel on the outside of the ribosome. Forms the main docking site for trigger factor binding to the ribosome. This is Large ribosomal subunit protein uL23 from Parafrankia sp. (strain EAN1pec).